Consider the following 160-residue polypeptide: Putative 4-hydroxy-4-methyl-2-oxoglutarate aldolase (160 aa).

Substrate-binding positions include 76–79 (GDMI) and Arg-98. Asp-99 contacts a divalent metal cation.

The protein belongs to the class II aldolase/RraA-like family. In terms of assembly, homotrimer. It depends on a divalent metal cation as a cofactor.

The catalysed reaction is 4-hydroxy-4-methyl-2-oxoglutarate = 2 pyruvate. The enzyme catalyses oxaloacetate + H(+) = pyruvate + CO2. Its function is as follows. Catalyzes the aldol cleavage of 4-hydroxy-4-methyl-2-oxoglutarate (HMG) into 2 molecules of pyruvate. Also contains a secondary oxaloacetate (OAA) decarboxylase activity due to the common pyruvate enolate transition state formed following C-C bond cleavage in the retro-aldol and decarboxylation reactions. The sequence is that of Putative 4-hydroxy-4-methyl-2-oxoglutarate aldolase from Alcanivorax borkumensis (strain ATCC 700651 / DSM 11573 / NCIMB 13689 / SK2).